The primary structure comprises 36 residues: Thrombin-like enzyme TLP (36 aa).

The Peptidase S1 domain occupies 1–36 (IGGFECNEHEHRSLVYLYNSAGFFCAGTLLNHEWVV).

Belongs to the peptidase S1 family. Snake venom subfamily. Monomer. As to expression, expressed by the venom gland.

Its subcellular location is the secreted. Its function is as follows. Thrombin-like snake venom serine protease. Shows strong hydrolytic activity towards Boc-Asp(oBzl)-Pro-Arg-MCA, a synthetic substrate for thrombin. The polypeptide is Thrombin-like enzyme TLP (Naja naja (Indian cobra)).